The primary structure comprises 654 residues: Fructose-1,6-bisphosphatase class 3 (654 aa).

The disordered stretch occupies residues 288–307; the sequence is NPAFKPKKRPDKHERLTQRE. Basic and acidic residues predominate over residues 298–307; the sequence is DKHERLTQRE.

Belongs to the FBPase class 3 family. Requires Mn(2+) as cofactor.

It catalyses the reaction beta-D-fructose 1,6-bisphosphate + H2O = beta-D-fructose 6-phosphate + phosphate. Its pathway is carbohydrate biosynthesis; gluconeogenesis. This is Fructose-1,6-bisphosphatase class 3 from Staphylococcus aureus (strain USA300).